A 155-amino-acid polypeptide reads, in one-letter code: MLP-like protein 423 (155 aa).

The protein belongs to the MLP family.

In Arabidopsis thaliana (Mouse-ear cress), this protein is MLP-like protein 423 (MLP423).